Here is a 194-residue protein sequence, read N- to C-terminus: Peptidyl-tRNA hydrolase (194 aa).

Y16 contacts tRNA. The active-site Proton acceptor is the H21. Residues F67, N69, and N115 each coordinate tRNA.

The protein belongs to the PTH family. As to quaternary structure, monomer.

The protein localises to the cytoplasm. It carries out the reaction an N-acyl-L-alpha-aminoacyl-tRNA + H2O = an N-acyl-L-amino acid + a tRNA + H(+). Its function is as follows. Hydrolyzes ribosome-free peptidyl-tRNAs (with 1 or more amino acids incorporated), which drop off the ribosome during protein synthesis, or as a result of ribosome stalling. In terms of biological role, catalyzes the release of premature peptidyl moieties from peptidyl-tRNA molecules trapped in stalled 50S ribosomal subunits, and thus maintains levels of free tRNAs and 50S ribosomes. The polypeptide is Peptidyl-tRNA hydrolase (Salmonella dublin (strain CT_02021853)).